The chain runs to 345 residues: Cytoplasmic envelopment protein 2 (345 aa).

The tract at residues K26 to R35 is nuclear localization signal 1. The segment at C55–L63 is nuclear export signal. The interval R90–R94 is nuclear localization signal 2.

It belongs to the herpesviridae cytoplasmic envelopment protein 2 family. As to quaternary structure, interacts with cytoplasmic envelopment protein 3 and with the capsid. Interacts with host STING1; this interaction prevents viral DNA-triggered antiviral immune response.

It is found in the virion tegument. It localises to the host cytoplasm. Its subcellular location is the host nucleus. Plays a critical role in cytoplasmic virus egress. Participates in the final step of tegumentation and envelope acquisition within the host cytoplasm by directly interacting with the capsid. Upon virion binding to target cell, a signaling cascade is triggered to disrupt the interaction with the capsid, thereby preparing capsid uncoating. Additionally, antagonizes the viral DNA-triggered antiviral immune response by targeting host STING1 and preventing its dimerization and trafficking. In Human cytomegalovirus (strain AD169) (HHV-5), this protein is Cytoplasmic envelopment protein 2 (UL94).